The following is a 329-amino-acid chain: GTPase Obg (329 aa).

Residues 2–160 (YNFKDSVSIT…LNVRLELFLV (159 aa)) form the Obg domain. In terms of domain architecture, OBG-type G spans 161-327 (ADIGLVGPPN…LIKEFFILAK (167 aa)). GTP is bound by residues 167–174 (GPPNAGKS), 192–196 (FTTKI), 213–216 (DIPG), 280–283 (NKLD), and 308–310 (SIY). Ser174 and Thr194 together coordinate Mg(2+).

Belongs to the TRAFAC class OBG-HflX-like GTPase superfamily. OBG GTPase family. In terms of assembly, monomer. Mg(2+) serves as cofactor.

The protein localises to the cytoplasm. An essential GTPase which binds GTP, GDP and possibly (p)ppGpp with moderate affinity, with high nucleotide exchange rates and a fairly low GTP hydrolysis rate. Plays a role in control of the cell cycle, stress response, ribosome biogenesis and in those bacteria that undergo differentiation, in morphogenesis control. In Borrelia garinii subsp. bavariensis (strain ATCC BAA-2496 / DSM 23469 / PBi) (Borreliella bavariensis), this protein is GTPase Obg.